The primary structure comprises 333 residues: Biotin synthase (333 aa).

A Radical SAM core domain is found at 47-276 (ADIQRASLLS…KARVRLSAGR (230 aa)). 3 residues coordinate [4Fe-4S] cluster: Cys-62, Cys-66, and Cys-69. Positions 107, 139, 199, and 271 each coordinate [2Fe-2S] cluster.

The protein belongs to the radical SAM superfamily. Biotin synthase family. Homodimer. [4Fe-4S] cluster is required as a cofactor. Requires [2Fe-2S] cluster as cofactor.

It catalyses the reaction (4R,5S)-dethiobiotin + (sulfur carrier)-SH + 2 reduced [2Fe-2S]-[ferredoxin] + 2 S-adenosyl-L-methionine = (sulfur carrier)-H + biotin + 2 5'-deoxyadenosine + 2 L-methionine + 2 oxidized [2Fe-2S]-[ferredoxin]. It functions in the pathway cofactor biosynthesis; biotin biosynthesis; biotin from 7,8-diaminononanoate: step 2/2. Its function is as follows. Catalyzes the conversion of dethiobiotin (DTB) to biotin by the insertion of a sulfur atom into dethiobiotin via a radical-based mechanism. The protein is Biotin synthase of Methylobacterium nodulans (strain LMG 21967 / CNCM I-2342 / ORS 2060).